A 1904-amino-acid chain; its full sequence is Fatty acid synthase beta subunit hexB (1904 aa).

The interval 24–395 is acetyltransferase (AT) domain; it reads LSVAFGGQGP…TEGTGVRVIQ (372 aa). The tract at residues 447–691 is enoyl reductase (ER) domain; that stretch reads TQLLNAPPVM…LIVQTEGVGD (245 aa). A dehydratase (DH) domain region spans residues 1001–1491; the sequence is GPAADCWTHH…RPNDRLKIQL (491 aa). Residues 1399-1512 form the MaoC-like domain; the sequence is PGWNEGSTVL…MKVQAFNDET (114 aa). The segment at 1530-1893 is malonyl/palmitoyl transferase (MT/PT) domain; sequence YVFCGQGSQE…IEHVQSVTGS (364 aa).

The protein belongs to the fungal fatty acid synthetase subunit beta family. [Alpha(6)beta(6)] hexamers of two multifunctional subunits (alpha and beta).

It catalyses the reaction acetyl-CoA + n malonyl-CoA + 2n NADPH + 4n H(+) = a long-chain-acyl-CoA + n CoA + n CO2 + 2n NADP(+).. The enzyme catalyses holo-[ACP] + acetyl-CoA = acetyl-[ACP] + CoA. The catalysed reaction is holo-[ACP] + malonyl-CoA = malonyl-[ACP] + CoA. It carries out the reaction a (3R)-hydroxyacyl-[ACP] = a (2E)-enoyl-[ACP] + H2O. It catalyses the reaction a 2,3-saturated acyl-[ACP] + NAD(+) = a (2E)-enoyl-[ACP] + NADH + H(+). The enzyme catalyses (9Z)-octadecenoyl-[ACP] + H2O = (9Z)-octadecenoate + holo-[ACP] + H(+). Its pathway is mycotoxin biosynthesis. Its function is as follows. Fatty acid synthase beta subunit; part of the fragmented gene cluster that mediates the biosynthesis of dothistromin (DOTH), a polyketide toxin very similar in structure to the aflatoxin precursor, versicolorin B. The first step of the pathway is the conversion of acetate to norsolorinic acid (NOR) and requires the fatty acid synthase subunits hexA and hexB, as well as the polyketide synthase pksA. PksA combines a hexanoyl starter unit and 7 malonyl-CoA extender units to synthesize the precursor NOR. The hexanoyl starter unit is provided to the acyl-carrier protein (ACP) domain by the fungal fatty acid synthase hexA/hexB. The second step is the conversion of NOR to averantin (AVN) and requires the norsolorinic acid ketoreductase nor1, which catalyzes the dehydration of norsolorinic acid to form (1'S)-averantin. The cytochrome P450 monooxygenase avnA then catalyzes the hydroxylation of AVN to 5'hydroxyaverantin (HAVN). The next step is performed by adhA that transforms HAVN to averufin (AVF). Averufin might then be converted to hydroxyversicolorone by cypX and avfA. Hydroxyversicolorone is further converted versiconal hemiacetal acetate (VHA) by moxY. VHA is then the substrate for the versiconal hemiacetal acetate esterase est1 to yield versiconal (VAL). Versicolorin B synthase vbsA then converts VAL to versicolorin B (VERB) by closing the bisfuran ring. Then, the activity of the versicolorin B desaturase verB leads to versicolorin A (VERA). DotB, a predicted chloroperoxidase, may perform epoxidation of the A-ring of VERA. Alternatively, a cytochrome P450, such as cypX or avnA could catalyze this step. It is also possible that another, uncharacterized, cytochrome P450 enzyme is responsible for this step. Opening of the epoxide could potentially be achieved by the epoxide hydrolase epoA. However, epoA seems not to be required for DOTH biosynthesis, but other epoxide hydrolases may have the ability to complement this hydrolysis. Alternatively, opening of the epoxide ring could be achieved non-enzymatically. The next step is the deoxygenation of ring A to yield the 5,8-dihydroxyanthraquinone which is most likely catalyzed by the NADPH dehydrogenase encoded by ver1. The last stages of DOTH biosynthesis are proposed to involve hydroxylation of the bisfuran. OrdB and norB might have oxidative roles here. An alternative possibility is that cytochrome P450 monoogenases such as avnA and cypX might perform these steps in addition to previously proposed steps. This Dothistroma septosporum (strain NZE10 / CBS 128990) (Red band needle blight fungus) protein is Fatty acid synthase beta subunit hexB.